Consider the following 224-residue polypeptide: Holliday junction branch migration complex subunit RuvA (224 aa).

Residues 1–64 form a domain I region; the sequence is MIGKVAGILD…EDLLQLFGFP (64 aa). The interval 65–143 is domain II; the sequence is TMIEKEWHRL…ALMAMGGGTA (79 aa). The segment at 141–185 is disordered; the sequence is GTAALAPSEPPEPQPGTSSGSRRKTRAPEPPRPSHTADALSALAN. The segment at 144–170 is flexible linker; it reads ALAPSEPPEPQPGTSSGSRRKTRAPEP. A domain III region spans residues 171-224; sequence PRPSHTADALSALANLGYQPTDAAQAVAQAAGESPDADTAALIRAALKLLAPKS.

Belongs to the RuvA family. Homotetramer. Forms an RuvA(8)-RuvB(12)-Holliday junction (HJ) complex. HJ DNA is sandwiched between 2 RuvA tetramers; dsDNA enters through RuvA and exits via RuvB. An RuvB hexamer assembles on each DNA strand where it exits the tetramer. Each RuvB hexamer is contacted by two RuvA subunits (via domain III) on 2 adjacent RuvB subunits; this complex drives branch migration. In the full resolvosome a probable DNA-RuvA(4)-RuvB(12)-RuvC(2) complex forms which resolves the HJ.

It localises to the cytoplasm. The RuvA-RuvB-RuvC complex processes Holliday junction (HJ) DNA during genetic recombination and DNA repair, while the RuvA-RuvB complex plays an important role in the rescue of blocked DNA replication forks via replication fork reversal (RFR). RuvA specifically binds to HJ cruciform DNA, conferring on it an open structure. The RuvB hexamer acts as an ATP-dependent pump, pulling dsDNA into and through the RuvAB complex. HJ branch migration allows RuvC to scan DNA until it finds its consensus sequence, where it cleaves and resolves the cruciform DNA. This is Holliday junction branch migration complex subunit RuvA from Cereibacter sphaeroides (strain KD131 / KCTC 12085) (Rhodobacter sphaeroides).